The chain runs to 201 residues: Orotate phosphoribosyltransferase (201 aa).

113–121 (EDIITTGKS) is a 5-phospho-alpha-D-ribose 1-diphosphate binding site. Positions 117 and 145 each coordinate orotate.

The protein belongs to the purine/pyrimidine phosphoribosyltransferase family. PyrE subfamily. Homodimer. Requires Mg(2+) as cofactor.

The catalysed reaction is orotidine 5'-phosphate + diphosphate = orotate + 5-phospho-alpha-D-ribose 1-diphosphate. It participates in pyrimidine metabolism; UMP biosynthesis via de novo pathway; UMP from orotate: step 1/2. Catalyzes the transfer of a ribosyl phosphate group from 5-phosphoribose 1-diphosphate to orotate, leading to the formation of orotidine monophosphate (OMP). This chain is Orotate phosphoribosyltransferase, found in Helicobacter pylori (strain HPAG1).